The chain runs to 472 residues: Keratin, type I cytoskeletal 14 (472 aa).

The head stretch occupies residues 1 to 114 (MTTCSRQFTS…AGGDGLLVGS (114 aa)). The coil 1A stretch occupies residues 115–150 (EKVTMQNLNDRLASYLDKVRALEEANADLEVKIRDW). The IF rod domain occupies 115–426 (EKVTMQNLND…RLLEGEDAHL (312 aa)). The tract at residues 151 to 168 (YQRQRPAEIKDYSPYFKT) is linker 1. Residues 169 to 260 (IEDLRNKILT…KNHEEEMNAL (92 aa)) are coil 1B. A linker 12 region spans residues 261–283 (RGQVGGDVNVEMDAAPGVDLSRI). Positions 284–422 (LNEMRDQYEK…ATYRRLLEGE (139 aa)) are coil 2. Residues 423–472 (DAHLSSSQFSSGSQSSRDVTSSSRQIRTKVMDVHDGKVVSTHEQVLRTKN) form a tail region. The interaction with Type I keratins and keratin filaments stretch occupies residues 425-472 (HLSSSQFSSGSQSSRDVTSSSRQIRTKVMDVHDGKVVSTHEQVLRTKN). A disordered region spans residues 426-472 (LSSSQFSSGSQSSRDVTSSSRQIRTKVMDVHDGKVVSTHEQVLRTKN). Over residues 427-445 (SSSQFSSGSQSSRDVTSSS) the composition is skewed to low complexity. At Ser-435 the chain carries Phosphoserine.

The protein belongs to the intermediate filament family. Heterotetramer of two type I and two type II keratins. Forms a disulfide-linked heterodimer (via 2B domains) with KRT5 (via 2B domains). Forms a heterodimer with KRT1; the interaction is more abundant in the absence of KRT5. Interacts with PLEC isoform 1C, when in a heterodimer with KRT5. Interacts with TRADD and with keratin filaments. Associates with other type I keratins. Interacts with EPPK1. Interacts with KLHL24. Interacts with PKP1 (via N-terminus) and PKP2. A disulfide bond is formed between rather than within filaments and promotes the formation of a keratin filament cage around the nucleus. Post-translationally, ubiquitinated by the BCR(KLHL24) E3 ubiquitin ligase complex. In terms of tissue distribution, expressed in the corneal epithelium (at protein level). Detected in the basal layer, lowered within the more apically located layers specifically in the stratum spinosum, stratum granulosum but is not detected in stratum corneum. Strongly expressed in the outer root sheath of anagen follicles but not in the germinative matrix, inner root sheath or hair. Found in keratinocytes surrounding the club hair during telogen.

It localises to the cytoplasm. It is found in the nucleus. In terms of biological role, the nonhelical tail domain is involved in promoting KRT5-KRT14 filaments to self-organize into large bundles and enhances the mechanical properties involved in resilience of keratin intermediate filaments in vitro. The sequence is that of Keratin, type I cytoskeletal 14 (KRT14) from Homo sapiens (Human).